Here is a 243-residue protein sequence, read N- to C-terminus: Adenosine 5'-phosphosulfate reductase (243 aa).

The protein belongs to the PAPS reductase family. CysH subfamily. [4Fe-4S] cluster is required as a cofactor.

It is found in the cytoplasm. The catalysed reaction is [thioredoxin]-disulfide + sulfite + AMP + 2 H(+) = adenosine 5'-phosphosulfate + [thioredoxin]-dithiol. The protein operates within sulfur metabolism; hydrogen sulfide biosynthesis; sulfite from sulfate. Functionally, catalyzes the formation of sulfite from adenosine 5'-phosphosulfate (APS) using thioredoxin as an electron donor. This Staphylococcus haemolyticus (strain JCSC1435) protein is Adenosine 5'-phosphosulfate reductase.